Here is a 273-residue protein sequence, read N- to C-terminus: Octanoyltransferase LipM (273 aa).

The 209-residue stretch at 32–240 (GEIPPTLRFY…GFSEILNIEL (209 aa)) folds into the BPL/LPL catalytic domain. C142 (acyl-thioester intermediate) is an active-site residue.

Belongs to the octanoyltransferase LipM family. As to quaternary structure, monomer.

The enzyme catalyses octanoyl-[ACP] + L-lysyl-[protein] = N(6)-octanoyl-L-lysyl-[protein] + holo-[ACP] + H(+). It functions in the pathway protein modification; protein lipoylation via endogenous pathway; protein N(6)-(lipoyl)lysine from octanoyl-[acyl-carrier-protein]. In terms of biological role, catalyzes the transfer of endogenously produced octanoic acid from octanoyl-acyl-carrier-protein onto the lipoyl domain of GcvH, an intermediate carrier during protein lipoylation. This chain is Octanoyltransferase LipM, found in Oceanobacillus iheyensis (strain DSM 14371 / CIP 107618 / JCM 11309 / KCTC 3954 / HTE831).